Reading from the N-terminus, the 445-residue chain is Trimethylamine monooxygenase (445 aa).

Residues Ser-14, Glu-39, Gln-41, Leu-47, Trp-48, and His-64 each contribute to the FAD site. NADP(+)-binding residues include Trp-72 and Asn-74. Positions 74 and 127 each coordinate FAD. NADP(+) is bound by residues Thr-204, Ser-205, Ser-207, and Arg-228. Residues Gln-317 and Thr-320 each coordinate FAD. Arg-411 serves as a coordination point for NADP(+).

It belongs to the FMO family. The cofactor is FAD.

The catalysed reaction is trimethylamine + NADPH + O2 = trimethylamine N-oxide + NADP(+) + H2O. Functionally, catalyzes the oxidation of trimethylamine (TMA) to produce trimethylamine N-oxide (TMAO). In vitro, has a broad substrate specificity, oxidizing many nitrogen- and sulfur-containing compounds, including dimethylamine (DMA), dimethylsulfide (DMS) and dimethylsulfoxide (DMSO). In Roseovarius sp. (strain 217), this protein is Trimethylamine monooxygenase.